The primary structure comprises 212 residues: Thymidylate kinase (212 aa).

Residue 10–17 participates in ATP binding; it reads GPDGAGKT.

It belongs to the thymidylate kinase family.

It catalyses the reaction dTMP + ATP = dTDP + ADP. Functionally, phosphorylation of dTMP to form dTDP in both de novo and salvage pathways of dTTP synthesis. The polypeptide is Thymidylate kinase (Exiguobacterium sibiricum (strain DSM 17290 / CCUG 55495 / CIP 109462 / JCM 13490 / 255-15)).